A 214-amino-acid polypeptide reads, in one-letter code: Probable transaldolase (214 aa).

The active-site Schiff-base intermediate with substrate is K83.

This sequence belongs to the transaldolase family. Type 3B subfamily.

It localises to the cytoplasm. The enzyme catalyses D-sedoheptulose 7-phosphate + D-glyceraldehyde 3-phosphate = D-erythrose 4-phosphate + beta-D-fructose 6-phosphate. It functions in the pathway carbohydrate degradation; pentose phosphate pathway; D-glyceraldehyde 3-phosphate and beta-D-fructose 6-phosphate from D-ribose 5-phosphate and D-xylulose 5-phosphate (non-oxidative stage): step 2/3. In terms of biological role, transaldolase is important for the balance of metabolites in the pentose-phosphate pathway. This Brevibacillus brevis (strain 47 / JCM 6285 / NBRC 100599) protein is Probable transaldolase.